A 1441-amino-acid chain; its full sequence is Probable ubiquitin-conjugating enzyme E2 R521 (1441 aa).

The helical transmembrane segment at 20 to 40 threads the bilayer; that stretch reads YIHHIIINYITNSILYFFLIM. A coiled-coil region spans residues 63–89; it reads NQSKLVNTLDIIKDEINKWEEKNTDKD. Over residues 180 to 199 the composition is skewed to basic and acidic residues; sequence VSKDKMKDKSESNSEHEQES. Disordered regions lie at residues 180–207 and 283–305; these read VSKDKMKDKSESNSEHEQESKSVVSNEI and IFGKSKNSGPSSSKTSISSMSKV. Residues 286–303 show a composition bias toward low complexity; sequence KSKNSGPSSSKTSISSMS. The stretch at 340-368 forms a coiled coil; the sequence is TTNEDNNDLDNLINEVERLVQETKDQETK. Low complexity predominate over residues 505–538; that stretch reads TVEPVQEVAEEPVQQEVAEEPVQQEVAEEPVQQE. Disordered stretches follow at residues 505–554 and 577–605; these read TVEP…PVQK and NDFSDHSDSPEPSDSSDSEEEITNSNNLG. Residues 539-549 show a composition bias toward acidic residues; it reads VAEEPVQEVAE. One can recognise a UBC core domain in the interval 1217–1380; sequence AISRELLSHS…VRFNCMKWAM (164 aa). Catalysis depends on cysteine 1306, which acts as the Glycyl thioester intermediate.

This sequence belongs to the ubiquitin-conjugating enzyme family.

The protein resides in the membrane. The catalysed reaction is S-ubiquitinyl-[E1 ubiquitin-activating enzyme]-L-cysteine + [E2 ubiquitin-conjugating enzyme]-L-cysteine = [E1 ubiquitin-activating enzyme]-L-cysteine + S-ubiquitinyl-[E2 ubiquitin-conjugating enzyme]-L-cysteine.. It participates in protein modification; protein ubiquitination. Catalyzes the covalent attachment of ubiquitin to other proteins. This Acanthamoeba polyphaga (Amoeba) protein is Probable ubiquitin-conjugating enzyme E2 R521.